The sequence spans 565 residues: Urease subunit beta (565 aa).

The 436-residue stretch at 130–565 folds into the Urease domain; the sequence is GGIDTHIHFI…LALARKYFMI (436 aa). Ni(2+) contacts are provided by H135, H137, and K218. The residue at position 218 (K218) is an N6-carboxylysine. A substrate-binding site is contributed by H220. Residues H247 and H273 each coordinate Ni(2+). H321 acts as the Proton donor in catalysis. Ni(2+) is bound at residue D361.

Belongs to the metallo-dependent hydrolases superfamily. Urease alpha subunit family. Heterohexamer of 3 UreA (alpha) and 3 UreB (beta) subunits. The cofactor is Ni cation. Carboxylation allows a single lysine to coordinate two nickel ions.

It localises to the cytoplasm. The catalysed reaction is urea + 2 H2O + H(+) = hydrogencarbonate + 2 NH4(+). Its pathway is nitrogen metabolism; urea degradation; CO(2) and NH(3) from urea (urease route): step 1/1. The protein is Urease subunit beta of Campylobacter lari.